Reading from the N-terminus, the 213-residue chain is Large ribosomal subunit protein uL3 (213 aa).

Residues 122–147 (AIKRHGQSRGPMAHGSRYHRRPGSMG) form a disordered region.

Belongs to the universal ribosomal protein uL3 family. Part of the 50S ribosomal subunit. Forms a cluster with proteins L14 and L19.

Functionally, one of the primary rRNA binding proteins, it binds directly near the 3'-end of the 23S rRNA, where it nucleates assembly of the 50S subunit. This chain is Large ribosomal subunit protein uL3, found in Geobacillus stearothermophilus (Bacillus stearothermophilus).